Here is a 605-residue protein sequence, read N- to C-terminus: Apoptosis-inducing factor 3 (605 aa).

The tract at residues 22–45 (KERGKEELSASGKGSPRAYQGNGT) is disordered. Positions 70–165 (AAVCHVKDLE…VKIEKEKVYV (96 aa)) constitute a Rieske domain. Residues C109, H111, C128, and H131 each contribute to the [2Fe-2S] cluster site. Residues 201-205 (GAGAA), R235, K240, V270, D467, and W514 contribute to the FAD site.

This sequence belongs to the FAD-dependent oxidoreductase family. As to expression, ubiquitous. Expressed in bone marrow, cerebral cortex, liver, ovary, thymus, thyroid gland and tongue (at protein level).

The protein resides in the mitochondrion. Induces apoptosis through a caspase dependent pathway. Reduces mitochondrial membrane potential. The polypeptide is Apoptosis-inducing factor 3 (AIFM3) (Homo sapiens (Human)).